Reading from the N-terminus, the 242-residue chain is Ditrans,polycis-undecaprenyl-diphosphate synthase ((2E,6E)-farnesyl-diphosphate specific) (242 aa).

The active site involves Asp-21. A Mg(2+)-binding site is contributed by Asp-21. Residues 22–25 (GNGR), Trp-26, Arg-34, His-38, and 66–68 (SSE) each bind substrate. The active-site Proton acceptor is the Asn-69. Substrate-binding positions include Trp-70, Arg-72, Arg-189, and 195–197 (RIS). Position 208 (Glu-208) interacts with Mg(2+).

This sequence belongs to the UPP synthase family. As to quaternary structure, homodimer. The cofactor is Mg(2+).

The catalysed reaction is 8 isopentenyl diphosphate + (2E,6E)-farnesyl diphosphate = di-trans,octa-cis-undecaprenyl diphosphate + 8 diphosphate. Functionally, catalyzes the sequential condensation of isopentenyl diphosphate (IPP) with (2E,6E)-farnesyl diphosphate (E,E-FPP) to yield (2Z,6Z,10Z,14Z,18Z,22Z,26Z,30Z,34E,38E)-undecaprenyl diphosphate (di-trans,octa-cis-UPP). UPP is the precursor of glycosyl carrier lipid in the biosynthesis of bacterial cell wall polysaccharide components such as peptidoglycan and lipopolysaccharide. The protein is Ditrans,polycis-undecaprenyl-diphosphate synthase ((2E,6E)-farnesyl-diphosphate specific) of Haemophilus ducreyi (strain 35000HP / ATCC 700724).